The chain runs to 623 residues: Interferon-induced GTP-binding protein Mx3 (623 aa).

The region spanning 31 to 304 (DLALPAIAVI…LVHHIEKSLP (274 aa)) is the Dynamin-type G domain. The interval 41–48 (GDQSSGKS) is G1 motif. 41–48 (GDQSSGKS) serves as a coordination point for GTP. Positions 66-68 (VTR) are G2 motif. Residues 142-145 (DLPG) form a G3 motif region. GTP is bound by residues 142–146 (DLPGI) and 211–214 (TKPD). The tract at residues 211 to 214 (TKPD) is G4 motif. Positions 243–246 (KCRG) are G5 motif. Positions 537–623 (LQEMMLHLKS…MKARSYLVEF (87 aa)) constitute a GED domain.

This sequence belongs to the TRAFAC class dynamin-like GTPase superfamily. Dynamin/Fzo/YdjA family.

It localises to the cytoplasm. Functionally, does not inhibit strain RB-1 of the fish pathogen, infectious hematopoietic necrosis virus (IHNV). This is Interferon-induced GTP-binding protein Mx3 from Oncorhynchus mykiss (Rainbow trout).